Reading from the N-terminus, the 379-residue chain is Chaperone protein DnaJ (379 aa).

A J domain is found at E5 to G69. The CR-type zinc-finger motif lies at G135–T217. Zn(2+) is bound by residues C148, C151, C165, C168, C191, C194, C205, and C208. 4 CXXCXGXG motif repeats span residues C148–G155, C165–G172, C191–G198, and C205–G212.

It belongs to the DnaJ family. As to quaternary structure, homodimer. The cofactor is Zn(2+).

It localises to the cytoplasm. Its function is as follows. Participates actively in the response to hyperosmotic and heat shock by preventing the aggregation of stress-denatured proteins and by disaggregating proteins, also in an autonomous, DnaK-independent fashion. Unfolded proteins bind initially to DnaJ; upon interaction with the DnaJ-bound protein, DnaK hydrolyzes its bound ATP, resulting in the formation of a stable complex. GrpE releases ADP from DnaK; ATP binding to DnaK triggers the release of the substrate protein, thus completing the reaction cycle. Several rounds of ATP-dependent interactions between DnaJ, DnaK and GrpE are required for fully efficient folding. Also involved, together with DnaK and GrpE, in the DNA replication of plasmids through activation of initiation proteins. The polypeptide is Chaperone protein DnaJ (Streptococcus agalactiae serotype III (strain NEM316)).